The following is a 268-amino-acid chain: Tryptophan synthase alpha chain (268 aa).

Catalysis depends on proton acceptor residues Glu-49 and Asp-60.

This sequence belongs to the TrpA family. As to quaternary structure, tetramer of two alpha and two beta chains.

It catalyses the reaction (1S,2R)-1-C-(indol-3-yl)glycerol 3-phosphate + L-serine = D-glyceraldehyde 3-phosphate + L-tryptophan + H2O. It participates in amino-acid biosynthesis; L-tryptophan biosynthesis; L-tryptophan from chorismate: step 5/5. Its function is as follows. The alpha subunit is responsible for the aldol cleavage of indoleglycerol phosphate to indole and glyceraldehyde 3-phosphate. The sequence is that of Tryptophan synthase alpha chain from Aeromonas salmonicida (strain A449).